A 439-amino-acid chain; its full sequence is Protease Do-like 1, chloroplastic (439 aa).

The tract at residues 154–323 (QGSGSGFVWD…IPVDTVGGIV (170 aa)) is serine protease. Active-site charge relay system residues include H173, D203, and S282. The PDZ domain maps to 326–423 (LVRFGKVTRP…EVTVEVLRGD (98 aa)).

The protein belongs to the peptidase S1C family. Interacts with PTAC16 and other potential targets for degradation under high light conditions.

It is found in the plastid. The protein resides in the chloroplast thylakoid membrane. Inhibited by phenylmethylsulfonyl fluoride and O-phenanthroline. In terms of biological role, serine protease that is required at high temperature. May be involved in the degradation of damaged proteins. In vivo, can degrade beta-casein. The chain is Protease Do-like 1, chloroplastic (DEGP1) from Arabidopsis thaliana (Mouse-ear cress).